Consider the following 912-residue polypeptide: Probable dipeptidyl-aminopeptidase B (912 aa).

Residues 1 to 25 (MAAEKGESSDEERKPLTRDSMEYRD) are compositionally biased toward basic and acidic residues. Disordered stretches follow at residues 1 to 31 (MAAE…NSLH) and 49 to 70 (GSTH…SDDG). At 1-92 (MAAEKGESSD…GGKPVQKKVK (92 aa)) the chain is on the cytoplasmic side. Residues 93–113 (IVLGFLLFLCLSGWSLSFVLF) form a helical; Signal-anchor for type II membrane protein membrane-spanning segment. The Vacuolar portion of the chain corresponds to 114–912 (LFGGHESSKT…RAAIWVGLSI (799 aa)). 5 N-linked (GlcNAc...) asparagine glycosylation sites follow: Asn-130, Asn-210, Asn-346, Asn-569, and Asn-656. Ser-751 serves as the catalytic Charge relay system. Asn-810 carries N-linked (GlcNAc...) asparagine glycosylation. Residues Asp-828 and His-861 each act as charge relay system in the active site. N-linked (GlcNAc...) asparagine glycosylation occurs at Asn-897.

This sequence belongs to the peptidase S9B family.

Its subcellular location is the vacuole membrane. It carries out the reaction Release of an N-terminal dipeptide, Xaa-Yaa-|-Zaa-, from a polypeptide, preferentially when Yaa is Pro, provided Zaa is neither Pro nor hydroxyproline.. Type IV dipeptidyl-peptidase which removes N-terminal dipeptides sequentially from polypeptides having unsubstituted N-termini provided that the penultimate residue is proline. The sequence is that of Probable dipeptidyl-aminopeptidase B (DAPB) from Paracoccidioides lutzii (strain ATCC MYA-826 / Pb01) (Paracoccidioides brasiliensis).